The primary structure comprises 444 residues: Tubulin beta 8B (444 aa).

An MREI motif motif is present at residues 1-4 (MREI). 6 residues coordinate GTP: Q11, E69, S138, G142, T143, and G144. Residue E69 coordinates Mg(2+). At S172 the chain carries Phosphoserine; by CDK1. Residues N204 and N226 each coordinate GTP. Residues 421–444 (EYQQYQDATAEEEEDEEYAEEEVA) are disordered. Positions 429–444 (TAEEEEDEEYAEEEVA) are enriched in acidic residues. E436 bears the 5-glutamyl polyglutamate mark.

It belongs to the tubulin family. In terms of assembly, dimer of alpha and beta chains. A typical microtubule is a hollow water-filled tube with an outer diameter of 25 nm and an inner diameter of 15 nM. Alpha-beta heterodimers associate head-to-tail to form protofilaments running lengthwise along the microtubule wall with the beta-tubulin subunit facing the microtubule plus end conferring a structural polarity. Microtubules usually have 13 protofilaments but different protofilament numbers can be found in some organisms and specialized cells. Mg(2+) is required as a cofactor. Some glutamate residues at the C-terminus are polyglutamylated, resulting in polyglutamate chains on the gamma-carboxyl group. Polyglutamylation plays a key role in microtubule severing by spastin (SPAST). SPAST preferentially recognizes and acts on microtubules decorated with short polyglutamate tails: severing activity by SPAST increases as the number of glutamates per tubulin rises from one to eight, but decreases beyond this glutamylation threshold. Glutamylation is also involved in cilia motility. In terms of processing, some glutamate residues at the C-terminus are monoglycylated but not polyglycylated due to the absence of functional TTLL10 in human. Monoglycylation is mainly limited to tubulin incorporated into cilia and flagella axonemes, which is required for their stability and maintenance. Flagella glycylation controls sperm motility. Both polyglutamylation and monoglycylation can coexist on the same protein on adjacent residues, and lowering glycylation levels increases polyglutamylation, and reciprocally. Post-translationally, phosphorylated on Ser-172 by CDK1 during the cell cycle, from metaphase to telophase, but not in interphase. This phosphorylation inhibits tubulin incorporation into microtubules.

The protein resides in the cytoplasm. Its subcellular location is the cytoskeleton. Tubulin is the major constituent of microtubules, a cylinder consisting of laterally associated linear protofilaments composed of alpha- and beta-tubulin heterodimers. Microtubules grow by the addition of GTP-tubulin dimers to the microtubule end, where a stabilizing cap forms. Below the cap, tubulin dimers are in GDP-bound state, owing to GTPase activity of alpha-tubulin. This Homo sapiens (Human) protein is Tubulin beta 8B.